We begin with the raw amino-acid sequence, 522 residues long: GMP synthase [glutamine-hydrolyzing] (522 aa).

The Glutamine amidotransferase type-1 domain maps to 9-204 (KILILDFGAQ…VVDICGCQTL (196 aa)). The Nucleophile role is filled by C86. Active-site residues include H178 and E180. The GMPS ATP-PPase domain maps to 205 to 397 (WTSANIIEDQ…LGLPHAMVYR (193 aa)). 232–238 (SGGVDSS) lines the ATP pocket.

Homodimer.

It carries out the reaction XMP + L-glutamine + ATP + H2O = GMP + L-glutamate + AMP + diphosphate + 2 H(+). The protein operates within purine metabolism; GMP biosynthesis; GMP from XMP (L-Gln route): step 1/1. Functionally, catalyzes the synthesis of GMP from XMP. This is GMP synthase [glutamine-hydrolyzing] from Xylella fastidiosa (strain M23).